The sequence spans 102 residues: Monothiol glutaredoxin-S10 (102 aa).

Residues 1-101 enclose the Glutaredoxin domain; sequence MDVVARLASQ…ILLKEAGALW (101 aa). Cysteine 21 contacts [2Fe-2S] cluster. Residues 99 to 102 carry the Responsive for interaction with TGA factors motif; the sequence is ALWL.

It belongs to the glutaredoxin family. CC-type subfamily.

The protein resides in the cytoplasm. It is found in the nucleus. Its function is as follows. May only reduce GSH-thiol disulfides, but not protein disulfides. In Arabidopsis thaliana (Mouse-ear cress), this protein is Monothiol glutaredoxin-S10 (GRXS10).